The primary structure comprises 151 residues: Globin CTT-X (151 aa).

One can recognise a Globin domain in the interval 6–150 (TLDAHEVEQV…AFSVIFEVLE (145 aa)). Residues H64 and H99 each coordinate heme b.

It belongs to the globin family. As to quaternary structure, homodimer.

This Chironomus thummi thummi (Midge) protein is Globin CTT-X (CTT-10).